Reading from the N-terminus, the 346-residue chain is Annexin A1 (346 aa).

The residue at position 2 (Ala2) is an N-acetylalanine. Ser5 carries the phosphoserine; by TRPM7 modification. Residue Gln19 forms an Isoglutamyl lysine isopeptide (Gln-Lys) (interchain with K-?) linkage. Residue Tyr21 is modified to Phosphotyrosine. Ser27 carries the post-translational modification Phosphoserine; by PKC. 2 positions are modified to phosphoserine: Ser34 and Ser37. Annexin repeat units follow at residues 42 to 113 (FNVS…AMLK), 114 to 185 (TPAQ…ALAK), 197 to 269 (DLAD…TIVK), and 273 to 344 (STPA…ALCG). Residue Lys58 is modified to N6-acetyllysine. Gly59, Val60, Glu62, Arg97, Leu100, Glu105, Met127, Gly129, Gly131, Thr132, and Glu134 together coordinate Ca(2+). At Thr136 the chain carries Phosphothreonine. Asp171, Gly210, and Arg213 together coordinate Ca(2+). Residue Lys214 forms a Glycyl lysine isopeptide (Lys-Gly) (interchain with G-Cter in SUMO1); alternate linkage. A Glycyl lysine isopeptide (Lys-Gly) (interchain with G-Cter in SUMO2); alternate cross-link involves residue Lys214. Residues Gly215, Asp253, Glu255, and Leu256 each coordinate Ca(2+). Residue Lys257 forms a Glycyl lysine isopeptide (Lys-Gly) (interchain with G-Cter in SUMO1) linkage. Ca(2+) is bound by residues Glu261, Met286, Gly288, and Gly290. Position 312 is an N6-acetyllysine (Lys312). An intrachain disulfide couples Cys324 to Cys343. The Ca(2+) site is built by Leu328, Glu330, and Thr331. Lys332 is covalently cross-linked (Glycyl lysine isopeptide (Lys-Gly) (interchain with G-Cter in SUMO1)). Residue Glu336 coordinates Ca(2+).

It belongs to the annexin family. Homodimer; non-covalently linked. Homodimer; linked by transglutamylation. Homodimers linked by transglutamylation are observed in placenta, but not in other tissues. Interacts with S100A11. Heterotetramer, formed by two molecules each of S100A11 and ANXA1. Interacts with DYSF. Interacts with EGFR. Phosphorylated by protein kinase C, EGFR and TRPM7. Phosphorylated in response to EGF treatment. In terms of processing, sumoylated. Post-translationally, proteolytically cleaved by cathepsin CTSG to release the active N-terminal peptide Ac2-26. Detected in lung. Detected at the apical membrane of airway epithelial cells. Detected in intestinal epithelial cells. Detected in skeletal muscle. Detected in prostate. Detected in thymus (at protein level). Detected in stomach, lung, spleen, ovary and uterus, and at lower levels in kidney, thymus and heart.

The protein localises to the nucleus. The protein resides in the cytoplasm. Its subcellular location is the cell projection. It is found in the cilium. It localises to the basolateral cell membrane. The protein localises to the lateral cell membrane. The protein resides in the cell membrane. Its subcellular location is the apical cell membrane. It is found in the membrane. It localises to the early endosome. The protein localises to the cytoplasmic vesicle membrane. The protein resides in the endosome membrane. Its subcellular location is the secreted. It is found in the extracellular space. It localises to the extracellular exosome. The protein localises to the cytoplasmic vesicle. The protein resides in the secretory vesicle lumen. Its subcellular location is the phagocytic cup. Plays important roles in the innate immune response as effector of glucocorticoid-mediated responses and regulator of the inflammatory process. Has anti-inflammatory activity. Plays a role in glucocorticoid-mediated down-regulation of the early phase of the inflammatory response. Contributes to the adaptive immune response by enhancing signaling cascades that are triggered by T-cell activation, regulates differentiation and proliferation of activated T-cells. Promotes the differentiation of T-cells into Th1 cells and negatively regulates differentiation into Th2 cells. Has no effect on unstimulated T-cells. Negatively regulates hormone exocytosis via activation of the formyl peptide receptors and reorganization of the actin cytoskeleton. Has high affinity for Ca(2+) and can bind up to eight Ca(2+) ions. Displays Ca(2+)-dependent binding to phospholipid membranes. Plays a role in the formation of phagocytic cups and phagosomes. Plays a role in phagocytosis by mediating the Ca(2+)-dependent interaction between phagosomes and the actin cytoskeleton. Functionally, functions at least in part by activating the formyl peptide receptors and downstream signaling cascades. Promotes chemotaxis of granulocytes and monocytes via activation of the formyl peptide receptors. Promotes rearrangement of the actin cytoskeleton, cell polarization and cell migration. Promotes resolution of inflammation and wound healing. Acts via neutrophil N-formyl peptide receptors to enhance the release of CXCL2. The protein is Annexin A1 (Anxa1) of Mus musculus (Mouse).